We begin with the raw amino-acid sequence, 501 residues long: WD repeat-containing protein wdr-5.3 (501 aa).

Disordered regions lie at residues 1–35 (MNPE…LESN), 58–85 (PIGV…YQSH), and 155–197 (KSAE…ITKK). A compositionally biased stretch (polar residues) spans 22 to 35 (PNQQSLQSRMLESN). Polar residues predominate over residues 167–177 (SITTKPTSTIQ). WD repeat units follow at residues 211-241 (GHTK…KVWN), 253-283 (SHQL…KIFD), 295-325 (GHTN…RVWD), 337-367 (AHSD…RVWD), 381-410 (DHAP…KLWD), 422-455 (GHKN…LVWS), and 467-499 (GHTT…RIWR).

The protein belongs to the WD repeat WDR5/wds family.

Its function is as follows. Not required for methylation of histone H3 'Lys-4'. The chain is WD repeat-containing protein wdr-5.3 (wdr-5.3) from Caenorhabditis elegans.